A 47-amino-acid chain; its full sequence is Protein YqhI (47 aa).

This chain is Protein YqhI, found in Escherichia coli (strain K12).